Here is a 225-residue protein sequence, read N- to C-terminus: Endo-1,4-beta-xylanase (225 aa).

Positions 1–31 (MVGFTPVALAALAATGALAFPAGNATELEKR) are cleaved as a signal peptide. A Pyrrolidone carboxylic acid modification is found at Gln-32. The GH11 domain maps to 32–222 (QTTPNSEGWH…SSGYARITVA (191 aa)). The active-site Nucleophile is Glu-117. Cys-141 and Cys-185 form a disulfide bridge. Glu-209 (proton donor) is an active-site residue.

It catalyses the reaction Endohydrolysis of (1-&gt;4)-beta-D-xylosidic linkages in xylans.. It functions in the pathway glycan degradation; xylan degradation. The sequence is that of Endo-1,4-beta-xylanase (XYNA) from Thermomyces lanuginosus (Humicola lanuginosa).